The primary structure comprises 351 residues: Heat-inducible transcription repressor HrcA (351 aa).

This sequence belongs to the HrcA family.

In terms of biological role, negative regulator of class I heat shock genes (grpE-dnaK-dnaJ and groELS operons). Prevents heat-shock induction of these operons. This chain is Heat-inducible transcription repressor HrcA, found in Mycoplasma pneumoniae (strain ATCC 29342 / M129 / Subtype 1) (Mycoplasmoides pneumoniae).